The chain runs to 280 residues: F420-dependent methylenetetrahydromethanopterin dehydrogenase (280 aa).

This sequence belongs to the MTD family.

It carries out the reaction 5,10-methylenetetrahydromethanopterin + oxidized coenzyme F420-(gamma-L-Glu)(n) + 2 H(+) = 5,10-methenyl-5,6,7,8-tetrahydromethanopterin + reduced coenzyme F420-(gamma-L-Glu)(n). Its pathway is one-carbon metabolism; methanogenesis from CO(2); 5,10-methylene-5,6,7,8-tetrahydromethanopterin from 5,10-methenyl-5,6,7,8-tetrahydromethanopterin (coenzyme F420 route): step 1/1. Catalyzes the reversible reduction of methenyl-H(4)MPT(+) to methylene-H(4)MPT. The chain is F420-dependent methylenetetrahydromethanopterin dehydrogenase from Methanocorpusculum labreanum (strain ATCC 43576 / DSM 4855 / Z).